The primary structure comprises 151 residues: Acidic phospholipase A2 1 (151 aa).

Residues 1–27 form the signal peptide; the sequence is MYPAHLLVLLAVCVSLLGAASIPARPL. Intrachain disulfides connect C38-C104, C54-C151, C56-C72, C71-C132, C78-C125, C88-C118, and C111-C123. Ca(2+) is bound by residues Y55, G57, and G59. H75 is a catalytic residue. D76 is a Ca(2+) binding site. D126 is a catalytic residue.

This sequence belongs to the phospholipase A2 family. Group I subfamily. D49 sub-subfamily. Requires Ca(2+) as cofactor. Expressed by the venom gland.

Its subcellular location is the secreted. The catalysed reaction is a 1,2-diacyl-sn-glycero-3-phosphocholine + H2O = a 1-acyl-sn-glycero-3-phosphocholine + a fatty acid + H(+). Its function is as follows. PLA2 catalyzes the calcium-dependent hydrolysis of the 2-acyl groups in 3-sn-phosphoglycerides. This is Acidic phospholipase A2 1 from Tropidechis carinatus (Australian rough-scaled snake).